The chain runs to 340 residues: Anthranilate phosphoribosyltransferase (340 aa).

Residues glycine 78, 81-82 (GD), threonine 86, 88-91 (NIST), 106-114 (KHGNRSVSS), and serine 118 contribute to the 5-phospho-alpha-D-ribose 1-diphosphate site. Glycine 78 is an anthranilate binding site. Serine 90 serves as a coordination point for Mg(2+). Asparagine 109 contributes to the anthranilate binding site. Residue arginine 164 coordinates anthranilate. Mg(2+) is bound by residues aspartate 223 and glutamate 224.

Belongs to the anthranilate phosphoribosyltransferase family. Homodimer. Requires Mg(2+) as cofactor.

It catalyses the reaction N-(5-phospho-beta-D-ribosyl)anthranilate + diphosphate = 5-phospho-alpha-D-ribose 1-diphosphate + anthranilate. It participates in amino-acid biosynthesis; L-tryptophan biosynthesis; L-tryptophan from chorismate: step 2/5. Catalyzes the transfer of the phosphoribosyl group of 5-phosphorylribose-1-pyrophosphate (PRPP) to anthranilate to yield N-(5'-phosphoribosyl)-anthranilate (PRA). In Bacillus pumilus (Bacillus mesentericus), this protein is Anthranilate phosphoribosyltransferase.